The sequence spans 193 residues: Probable nicotinate-nucleotide adenylyltransferase (193 aa).

It belongs to the NadD family.

The catalysed reaction is nicotinate beta-D-ribonucleotide + ATP + H(+) = deamido-NAD(+) + diphosphate. It participates in cofactor biosynthesis; NAD(+) biosynthesis; deamido-NAD(+) from nicotinate D-ribonucleotide: step 1/1. Its function is as follows. Catalyzes the reversible adenylation of nicotinate mononucleotide (NaMN) to nicotinic acid adenine dinucleotide (NaAD). This is Probable nicotinate-nucleotide adenylyltransferase from Borreliella afzelii (strain PKo) (Borrelia afzelii).